A 233-amino-acid polypeptide reads, in one-letter code: Orotidine 5'-phosphate decarboxylase (233 aa).

Substrate-binding positions include Asp13, Lys35, 62-71 (DLKFHDIPNT), Thr122, Arg182, Gln191, Gly211, and Arg212. Catalysis depends on Lys64, which acts as the Proton donor.

It belongs to the OMP decarboxylase family. Type 1 subfamily. In terms of assembly, homodimer.

It carries out the reaction orotidine 5'-phosphate + H(+) = UMP + CO2. The protein operates within pyrimidine metabolism; UMP biosynthesis via de novo pathway; UMP from orotate: step 2/2. Catalyzes the decarboxylation of orotidine 5'-monophosphate (OMP) to uridine 5'-monophosphate (UMP). The polypeptide is Orotidine 5'-phosphate decarboxylase (Pseudomonas fluorescens (strain ATCC BAA-477 / NRRL B-23932 / Pf-5)).